The sequence spans 299 residues: Pseudouridine-5'-phosphate glycosidase (299 aa).

Glu-23 serves as the catalytic Proton donor. Substrate-binding residues include Lys-84 and Val-104. Residue Asp-136 participates in Mn(2+) binding. Ser-138 to Asp-140 is a binding site for substrate. The active-site Nucleophile is the Lys-157.

The protein belongs to the pseudouridine-5'-phosphate glycosidase family. Homotrimer. The cofactor is Mn(2+).

It carries out the reaction D-ribose 5-phosphate + uracil = psi-UMP + H2O. Catalyzes the reversible cleavage of pseudouridine 5'-phosphate (PsiMP) to ribose 5-phosphate and uracil. Functions biologically in the cleavage direction, as part of a pseudouridine degradation pathway. In Solibacter usitatus (strain Ellin6076), this protein is Pseudouridine-5'-phosphate glycosidase.